Here is a 41-residue protein sequence, read N- to C-terminus: Large ribosomal subunit protein bL36 (41 aa).

Belongs to the bacterial ribosomal protein bL36 family.

This is Large ribosomal subunit protein bL36 from Xanthobacter autotrophicus (strain ATCC BAA-1158 / Py2).